The sequence spans 294 residues: Coiled-coil domain-containing protein 69 (294 aa).

The tract at residues 1 to 43 is disordered; that stretch reads MGCGHSRLSCCKPPKKRRQRPDQPPKPEPQELGPLNGDTATTD. A lipid anchor (N-myristoyl glycine) is attached at Gly2. Positions 20 to 29 are enriched in basic and acidic residues; it reads RPDQPPKPEP. Residues 47–270 adopt a coiled-coil conformation; that stretch reads ASEEAEQHQK…QEKEELLYRV (224 aa). Ser152 and Ser239 each carry phosphoserine.

Belongs to the CCDC69 family.

Its subcellular location is the cytoplasm. It is found in the cytoskeleton. It localises to the spindle. The protein localises to the midbody. May act as a scaffold to regulate the recruitment and assembly of spindle midzone components. Required for the localization of AURKB and PLK1 to the spindle midzone. This is Coiled-coil domain-containing protein 69 (CCDC69) from Bos taurus (Bovine).